The primary structure comprises 300 residues: Jacalin-related lectin 32 (300 aa).

The residue at position 2 (A2) is an N-acetylalanine. Jacalin-type lectin domains lie at 2 to 146 (AQKV…YFTT) and 154 to 297 (AKKL…HILP).

It belongs to the jacalin lectin family.

Involved in gametophytic development. This chain is Jacalin-related lectin 32 (JAL32), found in Arabidopsis thaliana (Mouse-ear cress).